A 292-amino-acid polypeptide reads, in one-letter code: Nucleotide-binding protein azo0399 (292 aa).

8 to 15 (GLSGSGKS) provides a ligand contact to ATP. GTP is bound at residue 57–60 (DMRS).

The protein belongs to the RapZ-like family.

Functionally, displays ATPase and GTPase activities. In Azoarcus sp. (strain BH72), this protein is Nucleotide-binding protein azo0399.